Here is a 221-residue protein sequence, read N- to C-terminus: MSDGDYDYLIKFLALGDSGVGKTSVLYQYTDGKFNSKFITTVGIDFREKRVVYRASGPDGATGRGQRIHLQLWDTAGQERFRSLTTAFFRDAMGFLLLFDLTNEQSFLNVRNWISQLQMHAYCENPDIVLCGNKSDLEDQRVVKEEEAIALAEKYGIPYFETSAANGTNISQAIEMLLDLIMKRMERCVDKSWIPEGVVRSNGHASTDQLSEEKEKGACGC.

An N-acetylserine modification is found at S2. A Phosphoserine modification is found at S2. 16–24 serves as a coordination point for GTP; sequence GDSGVGKTS. The Effector region motif lies at 38 to 46; that stretch reads FITTVGIDF. Residues 74-78, 133-136, and 163-165 contribute to the GTP site; these read DTAGQ, NKSD, and SAA. Residues C123 and C188 are joined by a disulfide bond. 2 S-geranylgeranyl cysteine lipidation sites follow: C219 and C221. C221 carries the post-translational modification Cysteine methyl ester.

This sequence belongs to the small GTPase superfamily. Rab family. In terms of assembly, binds SYTL1, SLAC2B, MYRIP, SYTL3, SYTL4 and SYTL5. Interacts with RPH3A and RPH3A. Binds MLPH and SYTL2. Interacts with UNC13D. Does not interact with the BLOC-3 complex (heterodimer of HPS1 and HPS4). Interacts (GDP-bound form preferentially) with DENND10. As to expression, found in all the examined tissues except in brain. Low expression was found in thymus, kidney, muscle and placenta. Detected in melanocytes, and in most tumor cell lines examined. Expressed in cytotoxic T-lymphocytes (CTL) and mast cells.

The protein localises to the membrane. It is found in the melanosome. Its subcellular location is the late endosome. The protein resides in the lysosome. The enzyme catalyses GTP + H2O = GDP + phosphate + H(+). With respect to regulation, regulated by guanine nucleotide exchange factors (GEFs) which promote the exchange of bound GDP for free GTP, GTPase activating proteins (GAPs) which increase the GTP hydrolysis activity, and GDP dissociation inhibitors which inhibit the dissociation of the nucleotide from the GTPase. Activated by GEFs such as DENND10. In terms of biological role, small GTPase which cycles between active GTP-bound and inactive GDP-bound states. In its active state, binds to a variety of effector proteins to regulate homeostasis of late endocytic pathway, including endosomal positioning, maturation and secretion. Plays a role in cytotoxic granule exocytosis in lymphocytes. Required for both granule maturation and granule docking and priming at the immunologic synapse. This Homo sapiens (Human) protein is Ras-related protein Rab-27A (RAB27A).